A 203-amino-acid polypeptide reads, in one-letter code: tRNA (cytidine(56)-2'-O)-methyltransferase (203 aa).

S-adenosyl-L-methionine is bound by residues Leu-80, 109–113 (GAEKV), and 127–134 (IGNQPHSE). Positions 178-203 (AEQDKAEGKATPGKNWENSGFTGDNP) are disordered. Residues 193–203 (WENSGFTGDNP) are compositionally biased toward polar residues.

Belongs to the aTrm56 family. As to quaternary structure, homodimer.

The protein resides in the cytoplasm. It catalyses the reaction cytidine(56) in tRNA + S-adenosyl-L-methionine = 2'-O-methylcytidine(56) in tRNA + S-adenosyl-L-homocysteine + H(+). Functionally, specifically catalyzes the AdoMet-dependent 2'-O-ribose methylation of cytidine at position 56 in tRNAs. The polypeptide is tRNA (cytidine(56)-2'-O)-methyltransferase (Pyrococcus horikoshii (strain ATCC 700860 / DSM 12428 / JCM 9974 / NBRC 100139 / OT-3)).